The sequence spans 1759 residues: Putative ATP-dependent RNA helicase TDRD12 (1759 aa).

Positions 74-153 (FQNLEQVWFS…KLSNTETRAV (80 aa)) constitute a Tudor 1 domain. Positions 480-495 (NSAASESSTKSSMDSS) are enriched in low complexity. The tract at residues 480–506 (NSAASESSTKSSMDSSRISDEDDLSSD) is disordered. Residues 611–789 (WGTILRGLST…DFLEPIVLKA (179 aa)) enclose the Helicase ATP-binding domain. Residue 624–631 (SPPRSGKT) participates in ATP binding. Positions 823-980 (NVLQFIDSVQ…NVPKILDEVS (158 aa)) constitute a Helicase C-terminal domain. Residues 1335–1394 (GSNVGDIVLAKFPDDSMYERARIDHIYSEDKVKCFFVDQGDWRDVSTNDLATITENFITQ) enclose the Tudor 2 domain. A CS domain is found at 1618–1704 (LSKPKICWSQ…LMCRNWLALT (87 aa)).

In terms of assembly, interacts (via Tudor domain 2) with Siwi. Component of the PET complex, at least composed of EXD1, SIWI, TDRD12 and piRNAs. In terms of tissue distribution, expressed in the yolk cells. Not detected in yolk granules.

It localises to the chromosome. Its subcellular location is the cytoplasm. It is found in the cytosol. The protein localises to the nucleus membrane. It catalyses the reaction ATP + H2O = ADP + phosphate + H(+). Probable ATP-binding RNA helicase required during spermatogenesis to repress transposable elements and preventing their mobilization, which is essential for the germline integrity. Acts via the piRNA metabolic process, which mediates the repression of transposable elements during meiosis by forming complexes composed of piRNAs and Piwi proteins and governs the methylation and subsequent repression of transposons. The chain is Putative ATP-dependent RNA helicase TDRD12 (TDRD12) from Bombyx mori (Silk moth).